The primary structure comprises 167 residues: SsrA-binding protein (167 aa).

The span at 139 to 158 (QNHDKRDAAKERDWQRDKQR) shows a compositional bias: basic and acidic residues. The interval 139-167 (QNHDKRDAAKERDWQRDKQRVMRRHNRDA) is disordered.

It belongs to the SmpB family.

The protein localises to the cytoplasm. Functionally, required for rescue of stalled ribosomes mediated by trans-translation. Binds to transfer-messenger RNA (tmRNA), required for stable association of tmRNA with ribosomes. tmRNA and SmpB together mimic tRNA shape, replacing the anticodon stem-loop with SmpB. tmRNA is encoded by the ssrA gene; the 2 termini fold to resemble tRNA(Ala) and it encodes a 'tag peptide', a short internal open reading frame. During trans-translation Ala-aminoacylated tmRNA acts like a tRNA, entering the A-site of stalled ribosomes, displacing the stalled mRNA. The ribosome then switches to translate the ORF on the tmRNA; the nascent peptide is terminated with the 'tag peptide' encoded by the tmRNA and targeted for degradation. The ribosome is freed to recommence translation, which seems to be the essential function of trans-translation. The sequence is that of SsrA-binding protein from Xanthomonas oryzae pv. oryzae (strain PXO99A).